An 89-amino-acid polypeptide reads, in one-letter code: Small ribosomal subunit protein uS15 (89 aa).

It belongs to the universal ribosomal protein uS15 family. In terms of assembly, part of the 30S ribosomal subunit. Forms a bridge to the 50S subunit in the 70S ribosome, contacting the 23S rRNA.

In terms of biological role, one of the primary rRNA binding proteins, it binds directly to 16S rRNA where it helps nucleate assembly of the platform of the 30S subunit by binding and bridging several RNA helices of the 16S rRNA. Forms an intersubunit bridge (bridge B4) with the 23S rRNA of the 50S subunit in the ribosome. The polypeptide is Small ribosomal subunit protein uS15 (Kineococcus radiotolerans (strain ATCC BAA-149 / DSM 14245 / SRS30216)).